Here is a 125-residue protein sequence, read N- to C-terminus: Small ribosomal subunit protein eS26 (125 aa).

The protein belongs to the eukaryotic ribosomal protein eS26 family.

This chain is Small ribosomal subunit protein eS26 (RPS26), found in Sterkiella nova (Ciliate).